The following is a 433-amino-acid chain: MASNSWNASSSPGEGREDGQDGMDKSLDNDAEGVWSPDIEQSFQEALAIYPPCGRRKIILSDEGKMYGRNELIARYIKLRTGKTRTKKQVSSHLQVLARREISGDSSKLKAMNLDQVSKDKAFQSMASMSSAQIVSASVLQNKLSPPPPLPQAVFSAAPRFWSGPIPGQPGPSQDIKPFAQPAYPIQPPMPPSLASYEPLAPLPPAASAVPVWQDRTIASAKLRLLEYSAFMEVPRDAETYSKHLFVHIGQTNPSYSDPLLEAMDIRQIYDKFPEKKGGLKELYERGPQNSFFLLKFWADLNSTIQDGPGTFYGVSSQYSSAENMTITVSTKVCSFGKQVVEKVETEYARLENSRFVYRIHRSPMCEYMINFIHKLKHLPEKYMMNSVLENFTILQVVTNRDTQETLLCIAFVFEVSTSEHGAQHHVYKLVKD.

The span at 1-12 (MASNSWNASSSP) shows a compositional bias: polar residues. Positions 1 to 35 (MASNSWNASSSPGEGREDGQDGMDKSLDNDAEGVW) are disordered. Residues 14–28 (EGREDGQDGMDKSLD) are compositionally biased toward basic and acidic residues. The TEA DNA-binding region spans 28–104 (DNDAEGVWSP…QVLARREISG (77 aa)). The transcriptional activation stretch occupies residues 171-433 (GPSQDIKPFA…QHHVYKLVKD (263 aa)).

High levels in cardiac muscle, low in skeletal muscle. Intermediate levels in gizzard and lung, low levels in kidney.

The protein resides in the nucleus. Its function is as follows. Transcription factor which plays a key role in the Hippo signaling pathway, a pathway involved in organ size control and tumor suppression by restricting proliferation and promoting apoptosis. The core of this pathway is composed of a kinase cascade wherein MST1/MST2, in complex with its regulatory protein SAV1, phosphorylates and activates LATS1/2 in complex with its regulatory protein MOB1, which in turn phosphorylates and inactivates YAP1 oncoprotein and WWTR1/TAZ. The chain is Transcriptional enhancer factor TEF-5 (TEAD3) from Gallus gallus (Chicken).